Consider the following 562-residue polypeptide: Vacuolar basic amino acid transporter 1 (562 aa).

At Met1 to Asn30 the chain is on the vacuolar side. The helical transmembrane segment at Leu31–Leu51 threads the bilayer. At Asp52–Arg100 the chain is on the cytoplasmic side. The helical transmembrane segment at Lys101–Ala121 threads the bilayer. The Vacuolar segment spans residues Arg122–Arg131. N-linked (GlcNAc...) asparagine glycosylation occurs at Asn123. The chain crosses the membrane as a helical span at residues Ala132–Ile152. Residues Cys153 to Asn166 are Cytoplasmic-facing. The helical transmembrane segment at Ile167–Ile187 threads the bilayer. Residues Gly188–Arg190 lie on the Vacuolar side of the membrane. The helical transmembrane segment at Ala191–Ile211 threads the bilayer. Over Asn212 to Arg232 the chain is Cytoplasmic. A helical membrane pass occupies residues Ile233–Ser253. Topologically, residues Ser254–Gln255 are vacuolar. The chain crosses the membrane as a helical span at residues Leu256 to Glu276. At Arg277–Arg292 the chain is on the cytoplasmic side. Residues Ser293–Phe313 form a helical membrane-spanning segment. The Vacuolar portion of the chain corresponds to Arg314–Gly331. The N-linked (GlcNAc...) asparagine glycan is linked to Asn324. The helical transmembrane segment at Leu332–Leu352 threads the bilayer. Topologically, residues Arg353–Gln365 are cytoplasmic. The chain crosses the membrane as a helical span at residues Ile366 to Ser386. The Vacuolar segment spans residues His387–Val419. The chain crosses the membrane as a helical span at residues Leu420–Val440. Residues Glu441–Met448 are Cytoplasmic-facing. A helical membrane pass occupies residues Thr449–Val469. Topologically, residues Ser470 to Lys528 are vacuolar. Asn504 carries an N-linked (GlcNAc...) asparagine glycan. The helical transmembrane segment at Ala529–Leu549 threads the bilayer. Over Tyr550–Ser562 the chain is Cytoplasmic.

The protein belongs to the major facilitator superfamily.

Its subcellular location is the vacuole membrane. In terms of biological role, transporter required for vacuolar uptake of at least histidine and lysine. This Saccharomyces cerevisiae (strain ATCC 204508 / S288c) (Baker's yeast) protein is Vacuolar basic amino acid transporter 1 (VBA1).